A 164-amino-acid chain; its full sequence is UPF0114 protein YqhA (164 aa).

A run of 3 helical transmembrane segments spans residues 15-35, 53-73, and 136-156; these read LLAP…LKFF, LILV…LVMV, and LMWY…MGYL.

Belongs to the UPF0114 family.

The protein localises to the cell membrane. This is UPF0114 protein YqhA from Salmonella agona (strain SL483).